Here is a 447-residue protein sequence, read N- to C-terminus: Ribosomal protein uS12 methylthiotransferase RimO (447 aa).

Residues 4–114 (PKVGFVSLGC…VMEAVHEYVP (111 aa)) enclose the MTTase N-terminal domain. Cys-13, Cys-49, Cys-78, Cys-147, Cys-151, and Cys-154 together coordinate [4Fe-4S] cluster. The 238-residue stretch at 133–370 (LTPKHYAYLK…MQVQQQISAA (238 aa)) folds into the Radical SAM core domain. The 71-residue stretch at 373–443 (QKRIGQTMTV…EYDLFAKLIK (71 aa)) folds into the TRAM domain.

This sequence belongs to the methylthiotransferase family. RimO subfamily. [4Fe-4S] cluster is required as a cofactor.

The protein resides in the cytoplasm. It catalyses the reaction L-aspartate(89)-[ribosomal protein uS12]-hydrogen + (sulfur carrier)-SH + AH2 + 2 S-adenosyl-L-methionine = 3-methylsulfanyl-L-aspartate(89)-[ribosomal protein uS12]-hydrogen + (sulfur carrier)-H + 5'-deoxyadenosine + L-methionine + A + S-adenosyl-L-homocysteine + 2 H(+). Functionally, catalyzes the methylthiolation of an aspartic acid residue of ribosomal protein uS12. This chain is Ribosomal protein uS12 methylthiotransferase RimO, found in Acinetobacter baumannii (strain AB307-0294).